Consider the following 435-residue polypeptide: Origin recognition complex subunit 5 (435 aa).

37-44 is a binding site for ATP; that stretch reads GHTASGKT.

This sequence belongs to the ORC5 family. As to quaternary structure, component of ORC, a complex composed of at least 6 subunits: ORC1, ORC2, ORC3, ORC4, ORC5 and ORC6. ORC is regulated in a cell-cycle dependent manner. It is sequentially assembled at the exit from anaphase of mitosis and disassembled as cells enter S phase. Multi-mono-ubiquitinated by OBI1; ubiquitination is important for efficient DNA replication origin site activation. Ubiquitination levels are low in mitotic and early G1-phAse cells and are induced in late G1-/early S-phase, peaking in S-phase and decrease toward the end of the cell cycle. Abundant in spleen, ovary, prostate, testis, and colon mucosa.

Its subcellular location is the nucleus. The protein resides in the chromosome. Its function is as follows. Component of the origin recognition complex (ORC) that binds origins of replication. DNA-binding is ATP-dependent. The specific DNA sequences that define origins of replication have not been identified yet. ORC is required to assemble the pre-replication complex necessary to initiate DNA replication. This is Origin recognition complex subunit 5 (ORC5) from Homo sapiens (Human).